The primary structure comprises 225 residues: Octanoyltransferase (225 aa).

The BPL/LPL catalytic domain maps to 42-219; sequence KNRQASMIFC…SICSALEYIN (178 aa). Substrate-binding positions include 79–86, 149–151, and 162–164; these read RGGKITWH, AIG, and GFA. The active-site Acyl-thioester intermediate is the C180.

The protein belongs to the LipB family.

It localises to the cytoplasm. It carries out the reaction octanoyl-[ACP] + L-lysyl-[protein] = N(6)-octanoyl-L-lysyl-[protein] + holo-[ACP] + H(+). Its pathway is protein modification; protein lipoylation via endogenous pathway; protein N(6)-(lipoyl)lysine from octanoyl-[acyl-carrier-protein]: step 1/2. Functionally, catalyzes the transfer of endogenously produced octanoic acid from octanoyl-acyl-carrier-protein onto the lipoyl domains of lipoate-dependent enzymes. Lipoyl-ACP can also act as a substrate although octanoyl-ACP is likely to be the physiological substrate. The protein is Octanoyltransferase of Tropheryma whipplei (strain TW08/27) (Whipple's bacillus).